The primary structure comprises 94 residues: Protein SpdA (94 aa).

A helical membrane pass occupies residues 41–68 (GPILLALVAAGGSVGVVMTLCLLLQTAA).

It localises to the cell membrane. Involved in plasmid transfer. This Streptomyces lividans protein is Protein SpdA (spdA).